A 590-amino-acid polypeptide reads, in one-letter code: MATIEEIAHQIIDQQMGEIVTEQQTGQKIQIVTALDHSTQGKQFILANHEGSTPGKVFLTTPDAAGVNQLFFTSPDLSAPHLQLLTEKSPDQGPNKVFDLCVVCGDKASGRHYGAITCEGCKGFFKRSIRKNLVYSCRGSKDCVINKHHRNRCQYCRLQRCIAFGMKQDSVQCERKPIEVSREKSSNCAASTEKIYIRKDLRSPLAATPTFVTDSETARSAGLLDSGMFVNIHPSGIKTEPAMLMAPDKAESCQGDLSTLASVVTSLANLGKAKDLSHCGGDMPVVQSLRNGDTSFGAFHHDIQTNGDVSRAFDTLAKALTPGESSACQSPEEGMEGSPHLIAGEPSFVEKEGPLLSESHVAFRLTMPSPMPEYLNVHYIGESASRLLFLSMHWALSIPSFQALGQENSISLVKAYWNELFTLGLAQCWQVMNVATILATFVNCLHSSLQQDKMSPERRKSLMEHIFKLQEFCNSMVKLCIDGHEYAYLKAIVLFSPDHPGLENMELIERFQEKAYVEFQDYITRTYPDDTYRLSRLLLRLPALRLMNATITEELFFKGLIGNVRIDSVIPHILKMEPADYNSQIIGHSL.

Residues M1 to M166 form a required for interaction with KAT2B region. A DNA-binding region (nuclear receptor) is located at residues F98–C173. NR C4-type zinc fingers lie at residues C101–C121 and C137–C156. Phosphoserine occurs at positions 185 and 203. T208 is modified (phosphothreonine). A Phosphothreonine; by MAPK1 modification is found at T210. Residue K238 forms a Glycyl lysine isopeptide (Lys-Gly) (interchain with G-Cter in SUMO); alternate linkage. K238 is covalently cross-linked (Glycyl lysine isopeptide (Lys-Gly) (interchain with G-Cter in SUMO2); alternate). The NR LBD domain occupies E333–E577. Phosphoserine; by PKC is present on residues S461 and S568. Residues P571 to L590 form a required for interaction with NRIP1 region. K575 participates in a covalent cross-link: Glycyl lysine isopeptide (Lys-Gly) (interchain with G-Cter in SUMO2).

It belongs to the nuclear hormone receptor family. NR2 subfamily. As to quaternary structure, homodimer. Heterodimer; with NR2C2 which is required for chromatin remodeling and for binding to promoter regions such as globin DR1 repeats. Interacts with ESR1; the interaction prevents homodimerization of ESR1 and suppresses its transcriptional activity and cell growth. Interacts with NRIP1 (via its LXXLL motifs); the interaction provides corepressor activity. Interacts with HDAC3 (via the DNA-binding domain); the interaction recruits phosphorylated NR2C1 to PML bodies for sumoylation. Interacts with HDAC4 (via the DNA-binding domain). Interacts with PIAS1; the interaction is required for sumoylation of NR2C1. Interacts with UBE2I; the interaction is required for sumoylation of NR2C1. Interacts with KAT2B; the interaction acts as a corepressor of gene expression. Sumoylation requires both PIAS1 and UBE2I. Sumoylation appears to dissociate NR2C1 from the PML nuclear bodies. Enhances the interaction with NRIP1 but inhibits interaction with KAT2B. In proliferating cells, stimulation by all-trans retinoic acid, activation of MAPK1-mediated phosphorylation and recruitment to PML bodies with subsequent sumoylation, suppresses OCT4 expression. Post-translationally, phosphorylated on several serine and threonine residues. Phosphorylation on Thr-210, stimulated by all-trans retinoic acid (atRA) mediates PML location and sumoylation in proliferating cells which then modulates its association with effector molecules, KAT2B and NRIP1. Phosphorylation on Ser-568 by PKC is important for protein stability and function as activator of RARB. Isoform 1 is highly expressed in the adlumenal compartment of the seminiferous tubule of adult testes (at protein level) and in the eyes of newborn animals. Weakly expressed in other adult organs including the seminal vesicle, prostate, ovary, adrenal gland, heart, thymus, placenta and brain. Expressed during embryonic stages in developing eyes, brain and cartilage primordia (at protein level). Also expressed in the developing spinal motor neurons and in the sympathetic-, parasympathetic- and sensory ganglia of the embryonic PNS. Expressed in the developing neural epithelia of the inner ear, nasal cavity, tongue and retina. At day 16.5, expressed in various tissues including kidney and intestine. In contrast, isoform 2 is widely expressed at a low level throughout the adult testis.

It is found in the nucleus. It localises to the PML body. Its function is as follows. Orphan nuclear receptor. Binds the IR7 element in the promoter of its own gene in an autoregulatory negative feedback mechanism. Primarily repressor of a broad range of genes including ESR1 and RARB. Together with NR2C2, forms the core of the DRED (direct repeat erythroid-definitive) complex that represses embryonic and fetal globin transcription. Binds to hormone response elements (HREs) consisting of two 5'-AGGTCA-3' half site direct repeat consensus sequences. Also activator of OCT4 gene expression. Plays a fundamental role in early embryogenesis and regulates embryonic stem cell proliferation and differentiation. Mediator of retinoic acid-regulated preadipocyte proliferation. This Mus musculus (Mouse) protein is Nuclear receptor subfamily 2 group C member 1.